Reading from the N-terminus, the 26-residue chain is Oxyopinin-3b (26 aa).

Expressed by the venom gland.

Its subcellular location is the secreted. May have cytolytic and antimicrobial activity. This is Oxyopinin-3b from Oxyopes takobius (Lynx spider).